The sequence spans 153 residues: Nucleoside diphosphate kinase 3 (153 aa).

6 residues coordinate ATP: Lys11, Phe59, Arg87, Thr93, Arg104, and Asn114. His117 acts as the Pros-phosphohistidine intermediate in catalysis.

The protein belongs to the NDK family. Homohexamer. Requires Mg(2+) as cofactor.

It localises to the plastid. It is found in the chloroplast thylakoid lumen. The enzyme catalyses a 2'-deoxyribonucleoside 5'-diphosphate + ATP = a 2'-deoxyribonucleoside 5'-triphosphate + ADP. The catalysed reaction is a ribonucleoside 5'-diphosphate + ATP = a ribonucleoside 5'-triphosphate + ADP. Its function is as follows. Major role in the synthesis of nucleoside triphosphates other than ATP. The ATP gamma phosphate is transferred to the NDP beta phosphate via a ping-pong mechanism, using a phosphorylated active-site intermediate. Shows the highest specificity towards GDP. In Spinacia oleracea (Spinach), this protein is Nucleoside diphosphate kinase 3.